Here is a 201-residue protein sequence, read N- to C-terminus: UPF0301 protein Avi_1069 (201 aa).

It belongs to the UPF0301 (AlgH) family.

In Allorhizobium ampelinum (strain ATCC BAA-846 / DSM 112012 / S4) (Agrobacterium vitis (strain S4)), this protein is UPF0301 protein Avi_1069.